The sequence spans 92 residues: Small ribosomal subunit protein uS19 (92 aa).

Belongs to the universal ribosomal protein uS19 family.

Its function is as follows. Protein S19 forms a complex with S13 that binds strongly to the 16S ribosomal RNA. The protein is Small ribosomal subunit protein uS19 of Xanthobacter autotrophicus (strain ATCC BAA-1158 / Py2).